Reading from the N-terminus, the 368-residue chain is 3-dehydroquinate synthase (368 aa).

Belongs to the archaeal-type DHQ synthase family.

The enzyme catalyses 2-amino-2,3,7-trideoxy-D-lyxo-hept-6-ulosonate + NAD(+) + H2O = 3-dehydroquinate + NH4(+) + NADH + H(+). Functionally, catalyzes the oxidative deamination and cyclization of 2-amino-3,7-dideoxy-D-threo-hept-6-ulosonic acid (ADH) to yield 3-dehydroquinate (DHQ), which is fed into the canonical shikimic pathway of aromatic amino acid biosynthesis. In Methanobrevibacter smithii (strain ATCC 35061 / DSM 861 / OCM 144 / PS), this protein is 3-dehydroquinate synthase.